A 245-amino-acid chain; its full sequence is 1-(5-phosphoribosyl)-5-[(5-phosphoribosylamino)methylideneamino] imidazole-4-carboxamide isomerase (245 aa).

The active-site Proton acceptor is the Asp7. The active-site Proton donor is Asp129.

The protein belongs to the HisA/HisF family.

It localises to the cytoplasm. The enzyme catalyses 1-(5-phospho-beta-D-ribosyl)-5-[(5-phospho-beta-D-ribosylamino)methylideneamino]imidazole-4-carboxamide = 5-[(5-phospho-1-deoxy-D-ribulos-1-ylimino)methylamino]-1-(5-phospho-beta-D-ribosyl)imidazole-4-carboxamide. The protein operates within amino-acid biosynthesis; L-histidine biosynthesis; L-histidine from 5-phospho-alpha-D-ribose 1-diphosphate: step 4/9. This chain is 1-(5-phosphoribosyl)-5-[(5-phosphoribosylamino)methylideneamino] imidazole-4-carboxamide isomerase, found in Escherichia coli O45:K1 (strain S88 / ExPEC).